The primary structure comprises 630 residues: Subtilisin-like protease 1 (630 aa).

A signal peptide spans 1–25; sequence MVLTRRAALLLCPWVIQLVIKRTLA. Positions 26-202 are cleaved as a propeptide — inhibition peptide; it reads GDILPNEGKK…IESDKLVGAD (177 aa). The segment at 72 to 125 is disordered; that stretch reads NAYNPDRDAPKEELQKLQDQQETPSKQPNNLRNSPQKRAEKKESPGKNKKSLRL. The span at 76-87 shows a compositional bias: basic and acidic residues; that stretch reads PDRDAPKEELQK. Over residues 94–107 the composition is skewed to polar residues; it reads TPSKQPNNLRNSPQ. Positions 108-117 are enriched in basic and acidic residues; that stretch reads KRAEKKESPG. Residues Glu-129, Asn-130, Thr-133, Pro-135, and Gly-190 each contribute to the Ca(2+) site. The interval 230-254 is disordered; sequence LEVPSGESPPSHAASSGSPFDDDDD. Positions 233–248 are enriched in low complexity; sequence PSGESPPSHAASSGSP. Ca(2+) is bound at residue Asp-281. Residues 287–604 enclose the Peptidase S8 domain; that stretch reads QWGLDLARLD…GGYVDILRAV (318 aa). 3 disulfides stabilise this stretch: Cys-313-Cys-423, Cys-402-Cys-419, and Cys-465-Cys-478. Asp-316 acts as the Charge relay system in catalysis. Ca(2+)-binding residues include Asp-325, Glu-336, Arg-340, Val-343, Asp-344, Asp-345, Asp-346, Asn-348, Val-350, Asp-352, and Asp-353. The Charge relay system role is filled by His-372. Positions 383, 386, 388, and 390 each coordinate Ca(2+). A glycan (N-linked (GlcNAc...) asparagine) is linked at Asn-546. Ser-549 functions as the Charge relay system in the catalytic mechanism.

This sequence belongs to the peptidase S8 family. Heterodimer between p54 form and prodomain p31; the interaction inhibits p54 catalytic activity. Heterodimer p31-p54 is monomeric at basic pH and dimeric at acidic pH; dimerization is driven by the N-terminal prodomain (p31). The cofactor is Ca(2+). Post-translationally, the prodomain (p31) is cleaved, probably by autocatalysis, and remains non-covalently associated with the p54 form as an inhibitor. p54 is further cleaved into the p45/p47 forms. The relevance of the N-glycosylation is not clear. In an insect expression system, SUB1 glycosylation appears to affect its processing into the active mature form suggesting that SUB1 may not be N-glycosylated in parasites.

It localises to the secreted. The protein localises to the parasitophorous vacuole lumen. The catalysed reaction is Hydrolysis of proteins with broad specificity for peptide bonds, and a preference for a large uncharged residue in P1. Hydrolyzes peptide amides.. Its activity is regulated as follows. Inhibited by peptidic alpha-ketoamide inhibitors. Inhibited by the alpha-ketoamide nonapeptide JMV5126 (isocaproyl-KITAQ(CO)DDEE-NH2). Inhibited by the alpha-ketoamide peptide MAM-117. Functionally, serine protease which plays an essential role in merozoite invasion of and egress from host erythrocytes by processing and activating various merozoite surface and parasitophorous vacuole proteins. The protein is Subtilisin-like protease 1 of Plasmodium vivax.